The primary structure comprises 122 residues: Large ribosomal subunit protein uL14 (122 aa).

It belongs to the universal ribosomal protein uL14 family. In terms of assembly, part of the 50S ribosomal subunit. Forms a cluster with proteins L3 and L19. In the 70S ribosome, L14 and L19 interact and together make contacts with the 16S rRNA in bridges B5 and B8.

Its function is as follows. Binds to 23S rRNA. Forms part of two intersubunit bridges in the 70S ribosome. The chain is Large ribosomal subunit protein uL14 from Paenarthrobacter aurescens (strain TC1).